We begin with the raw amino-acid sequence, 558 residues long: Probable rhamnogalacturonase B (558 aa).

The first 21 residues, 1 to 21, serve as a signal peptide directing secretion; it reads MLLDKLSVLSFLGLAPIFAAA. Cysteine 42 and cysteine 68 are disulfide-bonded. Asparagine 145 is a glycosylation site (N-linked (GlcNAc...) asparagine). Aspartate 219 (proton donor) is an active-site residue. A disulfide bridge connects residues cysteine 221 and cysteine 238. N-linked (GlcNAc...) asparagine glycosylation is found at asparagine 239 and asparagine 254. Histidine 294 is a catalytic residue. Asparagine 321 carries N-linked (GlcNAc...) asparagine glycosylation. Cystine bridges form between cysteine 344/cysteine 350 and cysteine 372/cysteine 381. The span at 503-526 shows a compositional bias: low complexity; it reads VGAQEGSTTSAPSFAAPSGAGNSP. The segment at 503-558 is disordered; the sequence is VGAQEGSTTSAPSFAAPSGAGNSPQGPTGASGFGEKGQQGEQGEQGEQGEQGVCYV.

The protein belongs to the glycosyl hydrolase 28 family.

The protein resides in the secreted. The catalysed reaction is Endohydrolysis of alpha-D-GalA-(1-&gt;2)-alpha-L-Rha glycosidic bond in the rhamnogalacturonan I backbone with initial inversion of anomeric configuration releasing oligosaccharides with beta-D-GalA at the reducing end.. In terms of biological role, pectinolytic enzymes consist of four classes of enzymes: pectine lyase, polygalacturonase, pectin methylesterase and rhamnogalacturonase. Hydrolyzes alpha-D-galacturonopyranosyl-(1,2)-alpha-L-rhamnopyranosyl linkages in the backbone of the hairy regions of pectins. The chain is Probable rhamnogalacturonase B (rhgB) from Aspergillus niger (strain ATCC MYA-4892 / CBS 513.88 / FGSC A1513).